Here is a 461-residue protein sequence, read N- to C-terminus: MSVIKEYRTASEVVGPLMIVEQVNNVSYNELVEIQLHNGEIRRGQVLEIHEDKAMVQLFEGSSGINLEKSKIRFAGHALELAVSEDMVGRIFNGMGKPIDGGPDLIPEKYLDIDGQAINPVSRDYPDEFIQTGISSIDHLNTLVRGQKLPVFSGSGLPHNELAAQIARQATVLNSDENFAVVFAAMGITFEEAEFFMEELRKTGAIDRSVLFMNLANDPAIERIATPRIALTAAEYLAFEKDMHVLVIMTDMTNYCEALREVSAARREVPGRRGYPGYLYTNLSTLYERAGRLVGKKGSVTQIPILTMPEDDITHPIPDLTGYITEGQIILSHELYNQGYRPPINVLSSLSRLKDKGSGEGKTRGDHAPTMNQLFAAYAQGKKVEELAVVLGESALSDVDKLYVRFTKRFEEEYINQGFYKNRNIEDTLNLGWELLSILPRTELKRIKDDLLDKYLPLVEV.

Belongs to the ATPase alpha/beta chains family.

In terms of biological role, produces ATP from ADP in the presence of a proton gradient across the membrane. The V-type beta chain is a regulatory subunit. The sequence is that of V-type ATP synthase beta chain from Streptococcus pneumoniae (strain CGSP14).